Here is a 503-residue protein sequence, read N- to C-terminus: 2-isopropylmalate synthase (503 aa).

4 residues coordinate Mn(2+): aspartate 1, histidine 189, histidine 191, and asparagine 225. The region spanning aspartate 1 to tyrosine 254 is the Pyruvate carboxyltransferase domain. Positions serine 379 to glutamine 503 are regulatory domain.

Belongs to the alpha-IPM synthase/homocitrate synthase family. LeuA type 1 subfamily. In terms of assembly, homodimer. It depends on Mn(2+) as a cofactor.

The protein resides in the cytoplasm. It carries out the reaction 3-methyl-2-oxobutanoate + acetyl-CoA + H2O = (2S)-2-isopropylmalate + CoA + H(+). It participates in amino-acid biosynthesis; L-leucine biosynthesis; L-leucine from 3-methyl-2-oxobutanoate: step 1/4. Its function is as follows. Catalyzes the condensation of the acetyl group of acetyl-CoA with 3-methyl-2-oxobutanoate (2-ketoisovalerate) to form 3-carboxy-3-hydroxy-4-methylpentanoate (2-isopropylmalate). The protein is 2-isopropylmalate synthase of Buchnera aphidicola subsp. Uroleucon ambrosiae.